Reading from the N-terminus, the 443-residue chain is Protein translocase subunit SecY (443 aa).

Transmembrane regions (helical) follow at residues 24 to 44 (LFVI…IPGI), 77 to 97 (IFAL…LLTV), 125 to 145 (LVLA…MPGM), 154 to 174 (FAFY…LMWL), 183 to 203 (IGNG…PPAI), 217 to 237 (FLVL…VVFV), 274 to 294 (VIPA…ASWF), 317 to 337 (YVLL…ALVF), 370 to 390 (MTRL…IPEF), and 397 to 417 (VPFY…MDFM).

The protein belongs to the SecY/SEC61-alpha family. As to quaternary structure, component of the Sec protein translocase complex. Heterotrimer consisting of SecY, SecE and SecG subunits. The heterotrimers can form oligomers, although 1 heterotrimer is thought to be able to translocate proteins. Interacts with the ribosome. Interacts with SecDF, and other proteins may be involved. Interacts with SecA.

The protein resides in the cell inner membrane. Its function is as follows. The central subunit of the protein translocation channel SecYEG. Consists of two halves formed by TMs 1-5 and 6-10. These two domains form a lateral gate at the front which open onto the bilayer between TMs 2 and 7, and are clamped together by SecE at the back. The channel is closed by both a pore ring composed of hydrophobic SecY resides and a short helix (helix 2A) on the extracellular side of the membrane which forms a plug. The plug probably moves laterally to allow the channel to open. The ring and the pore may move independently. This chain is Protein translocase subunit SecY, found in Escherichia coli O157:H7.